The following is a 251-amino-acid chain: Triosephosphate isomerase (251 aa).

9-11 (NWK) contacts substrate. Histidine 95 (electrophile) is an active-site residue. Glutamate 167 acts as the Proton acceptor in catalysis. Substrate is bound by residues glycine 173, serine 213, and 234-235 (GG). Serine 213 is modified (phosphoserine).

It belongs to the triosephosphate isomerase family. As to quaternary structure, homodimer.

The protein resides in the cytoplasm. The catalysed reaction is D-glyceraldehyde 3-phosphate = dihydroxyacetone phosphate. It functions in the pathway carbohydrate biosynthesis; gluconeogenesis. It participates in carbohydrate degradation; glycolysis; D-glyceraldehyde 3-phosphate from glycerone phosphate: step 1/1. Functionally, involved in the gluconeogenesis. Catalyzes stereospecifically the conversion of dihydroxyacetone phosphate (DHAP) to D-glyceraldehyde-3-phosphate (G3P). The protein is Triosephosphate isomerase of Priestia megaterium (strain DSM 319 / IMG 1521) (Bacillus megaterium).